Consider the following 285-residue polypeptide: Probable endonuclease 4 (285 aa).

Zn(2+) is bound by residues His69, His109, Glu145, Asp179, His182, His216, Asp229, His231, and Glu261.

It belongs to the AP endonuclease 2 family. The cofactor is Zn(2+).

It catalyses the reaction Endonucleolytic cleavage to 5'-phosphooligonucleotide end-products.. In terms of biological role, endonuclease IV plays a role in DNA repair. It cleaves phosphodiester bonds at apurinic or apyrimidinic (AP) sites, generating a 3'-hydroxyl group and a 5'-terminal sugar phosphate. The protein is Probable endonuclease 4 of Salmonella schwarzengrund (strain CVM19633).